The following is a 107-amino-acid chain: Putative nucleosome assembly protein 1-like 6 (107 aa).

The protein belongs to the nucleosome assembly protein (NAP) family.

This is Putative nucleosome assembly protein 1-like 6 from Homo sapiens (Human).